We begin with the raw amino-acid sequence, 216 residues long: Uracil-DNA glycosylase (216 aa).

The active-site Proton acceptor is the D59.

It belongs to the uracil-DNA glycosylase (UDG) superfamily. UNG family.

Its subcellular location is the cytoplasm. It catalyses the reaction Hydrolyzes single-stranded DNA or mismatched double-stranded DNA and polynucleotides, releasing free uracil.. Excises uracil residues from the DNA which can arise as a result of misincorporation of dUMP residues by DNA polymerase or due to deamination of cytosine. In Idiomarina loihiensis (strain ATCC BAA-735 / DSM 15497 / L2-TR), this protein is Uracil-DNA glycosylase.